A 94-amino-acid polypeptide reads, in one-letter code: Integration host factor subunit beta (94 aa).

This sequence belongs to the bacterial histone-like protein family. As to quaternary structure, heterodimer of an alpha and a beta chain.

In terms of biological role, this protein is one of the two subunits of integration host factor, a specific DNA-binding protein that functions in genetic recombination as well as in transcriptional and translational control. The protein is Integration host factor subunit beta of Pectobacterium atrosepticum (strain SCRI 1043 / ATCC BAA-672) (Erwinia carotovora subsp. atroseptica).